The chain runs to 867 residues: Putative ribosome biogenesis ATPase nvl (867 aa).

The tract at residues 70-203 (LSSCESSENE…NNNNGNNKDN (134 aa)) is disordered. Positions 110–122 (EQLTSQYKQNIKN) are enriched in polar residues. Composition is skewed to low complexity over residues 123–132 (TPPTTTTTTP), 141–172 (IPSN…TPNS), and 180–203 (NSSN…NKDN). Residue 257-264 (GPSGCGKT) participates in ATP binding. The tract at residues 351-370 (SSNNSTNEPNEQTEQQQQQQ) is disordered. Residue 607 to 614 (GPPGCGKT) coordinates ATP. Basic and acidic residues predominate over residues 834 to 843 (DINKSRDKKP). Residues 834-855 (DINKSRDKKPNNSNNIPITNNI) are disordered. Residues 844-855 (NNSNNIPITNNI) are compositionally biased toward low complexity.

Belongs to the AAA ATPase family.

The protein resides in the nucleus. It is found in the nucleolus. The protein localises to the nucleoplasm. Functionally, involved in ribosome biogenesis. In Dictyostelium discoideum (Social amoeba), this protein is Putative ribosome biogenesis ATPase nvl (nvl).